We begin with the raw amino-acid sequence, 373 residues long: Dual-specificity RNA methyltransferase RlmN (373 aa).

Glu94 serves as the catalytic Proton acceptor. A Radical SAM core domain is found at Glu100–Asp339. Cys107 and Cys344 are disulfide-bonded. 3 residues coordinate [4Fe-4S] cluster: Cys114, Cys118, and Cys121. Residues Gly168–Glu169, Ser200, Ser222–His224, and Asn301 each bind S-adenosyl-L-methionine. The S-methylcysteine intermediate role is filled by Cys344.

Belongs to the radical SAM superfamily. RlmN family. [4Fe-4S] cluster serves as cofactor.

Its subcellular location is the cytoplasm. The enzyme catalyses adenosine(2503) in 23S rRNA + 2 reduced [2Fe-2S]-[ferredoxin] + 2 S-adenosyl-L-methionine = 2-methyladenosine(2503) in 23S rRNA + 5'-deoxyadenosine + L-methionine + 2 oxidized [2Fe-2S]-[ferredoxin] + S-adenosyl-L-homocysteine. It carries out the reaction adenosine(37) in tRNA + 2 reduced [2Fe-2S]-[ferredoxin] + 2 S-adenosyl-L-methionine = 2-methyladenosine(37) in tRNA + 5'-deoxyadenosine + L-methionine + 2 oxidized [2Fe-2S]-[ferredoxin] + S-adenosyl-L-homocysteine. Specifically methylates position 2 of adenine 2503 in 23S rRNA and position 2 of adenine 37 in tRNAs. m2A2503 modification seems to play a crucial role in the proofreading step occurring at the peptidyl transferase center and thus would serve to optimize ribosomal fidelity. This is Dual-specificity RNA methyltransferase RlmN from Shewanella denitrificans (strain OS217 / ATCC BAA-1090 / DSM 15013).